We begin with the raw amino-acid sequence, 618 residues long: 1-deoxy-D-xylulose-5-phosphate synthase (618 aa).

Residues H74 and 115 to 117 (GHS) each bind thiamine diphosphate. Mg(2+) is bound at residue D146. Thiamine diphosphate is bound by residues 147-148 (GA), N175, Y286, and E366. N175 contributes to the Mg(2+) binding site.

The protein belongs to the transketolase family. DXPS subfamily. In terms of assembly, homodimer. Requires Mg(2+) as cofactor. It depends on thiamine diphosphate as a cofactor.

The catalysed reaction is D-glyceraldehyde 3-phosphate + pyruvate + H(+) = 1-deoxy-D-xylulose 5-phosphate + CO2. It participates in metabolic intermediate biosynthesis; 1-deoxy-D-xylulose 5-phosphate biosynthesis; 1-deoxy-D-xylulose 5-phosphate from D-glyceraldehyde 3-phosphate and pyruvate: step 1/1. Its function is as follows. Catalyzes the acyloin condensation reaction between C atoms 2 and 3 of pyruvate and glyceraldehyde 3-phosphate to yield 1-deoxy-D-xylulose-5-phosphate (DXP). The chain is 1-deoxy-D-xylulose-5-phosphate synthase from Clostridium tetani (strain Massachusetts / E88).